We begin with the raw amino-acid sequence, 277 residues long: 3-methyl-2-oxobutanoate hydroxymethyltransferase (277 aa).

The Mg(2+) site is built by Asp49 and Asp88. 3-methyl-2-oxobutanoate-binding positions include 49–50, Asp88, and Lys118; that span reads DS. Residue Glu120 coordinates Mg(2+). The Proton acceptor role is filled by Glu186.

It belongs to the PanB family. In terms of assembly, homodecamer; pentamer of dimers. Requires Mg(2+) as cofactor.

Its subcellular location is the cytoplasm. It carries out the reaction 3-methyl-2-oxobutanoate + (6R)-5,10-methylene-5,6,7,8-tetrahydrofolate + H2O = 2-dehydropantoate + (6S)-5,6,7,8-tetrahydrofolate. It functions in the pathway cofactor biosynthesis; (R)-pantothenate biosynthesis; (R)-pantoate from 3-methyl-2-oxobutanoate: step 1/2. Functionally, catalyzes the reversible reaction in which hydroxymethyl group from 5,10-methylenetetrahydrofolate is transferred onto alpha-ketoisovalerate to form ketopantoate. This is 3-methyl-2-oxobutanoate hydroxymethyltransferase from Cereibacter sphaeroides (strain ATCC 17029 / ATH 2.4.9) (Rhodobacter sphaeroides).